The following is a 91-amino-acid chain: Small ribosomal subunit protein uS15 (91 aa).

It belongs to the universal ribosomal protein uS15 family. As to quaternary structure, part of the 30S ribosomal subunit. Forms a bridge to the 50S subunit in the 70S ribosome, contacting the 23S rRNA.

In terms of biological role, one of the primary rRNA binding proteins, it binds directly to 16S rRNA where it helps nucleate assembly of the platform of the 30S subunit by binding and bridging several RNA helices of the 16S rRNA. Forms an intersubunit bridge (bridge B4) with the 23S rRNA of the 50S subunit in the ribosome. This chain is Small ribosomal subunit protein uS15, found in Legionella pneumophila (strain Paris).